Reading from the N-terminus, the 931-residue chain is Elicitor of plant defense protein 1 (931 aa).

Residues 13–32 (NYNSVIPPPEPLNTDPDMHP) form a disordered region. In terms of domain architecture, uDENN spans 19 to 277 (PPPEPLNTDP…NLCTEAFNPL (259 aa)). One can recognise a cDENN domain in the interval 301-433 (EIPGSRSIDL…ARRKLMSLLQ (133 aa)). The region spanning 435–799 (AAPHKLRYGV…DREMQPANNA (365 aa)) is the dDENN domain. 2 disordered regions span residues 478–552 (LGKW…SRSD) and 566–586 (SGHF…DKHP). The span at 521-537 (TSKSGKTSPQSSVSPVS) shows a compositional bias: polar residues. The span at 566–575 (SGHFGEEKMR) shows a compositional bias: basic and acidic residues. The segment at 666–714 (GHCFNWIPKDNTSICNICNDHAEGDGIYKCTGCKIFSHGRCLGHASLVC) adopts a Phorbol-ester/DAG-type zinc-finger fold.

This sequence belongs to the EPD1 elicitor family.

The protein localises to the secreted. It is found in the host cell. Functionally, acts as an elicitor that triggers cell death and defense responses in the host plants. In Fusarium odoratissimum (strain NRRL 54006), this protein is Elicitor of plant defense protein 1.